A 229-amino-acid chain; its full sequence is Large ribosomal subunit protein uL1 (229 aa).

Belongs to the universal ribosomal protein uL1 family. In terms of assembly, part of the 50S ribosomal subunit.

In terms of biological role, binds directly to 23S rRNA. The L1 stalk is quite mobile in the ribosome, and is involved in E site tRNA release. Protein L1 is also a translational repressor protein, it controls the translation of the L11 operon by binding to its mRNA. This chain is Large ribosomal subunit protein uL1, found in Chlorobium phaeobacteroides (strain DSM 266 / SMG 266 / 2430).